A 101-amino-acid chain; its full sequence is uncharacterized protein (101 aa).

This is an uncharacterized protein from Neurospora crassa (strain ATCC 24698 / 74-OR23-1A / CBS 708.71 / DSM 1257 / FGSC 987).